Consider the following 327-residue polypeptide: Methionyl-tRNA formyltransferase (327 aa).

Position 113 to 116 (S113 to P116) interacts with (6S)-5,6,7,8-tetrahydrofolate.

Belongs to the Fmt family.

The enzyme catalyses L-methionyl-tRNA(fMet) + (6R)-10-formyltetrahydrofolate = N-formyl-L-methionyl-tRNA(fMet) + (6S)-5,6,7,8-tetrahydrofolate + H(+). In terms of biological role, attaches a formyl group to the free amino group of methionyl-tRNA(fMet). The formyl group appears to play a dual role in the initiator identity of N-formylmethionyl-tRNA by promoting its recognition by IF2 and preventing the misappropriation of this tRNA by the elongation apparatus. This chain is Methionyl-tRNA formyltransferase, found in Colwellia psychrerythraea (strain 34H / ATCC BAA-681) (Vibrio psychroerythus).